We begin with the raw amino-acid sequence, 136 residues long: Protein NrdI (136 aa).

This sequence belongs to the NrdI family.

Functionally, probably involved in ribonucleotide reductase function. The chain is Protein NrdI from Enterobacter sp. (strain 638).